The chain runs to 710 residues: MFSAFIIKRSAILCSLAMFIPLASIADDTIEVTAKAGHEADLPTSGYTATTTKGATKTDQPLILTAQSVSVVTRQQMDDQNVATVNQALNYTPGVFTGFSGGATRYDTVALRGFHGGDVNNTFLDGLRLLSDGGSYNVLQVDPWFLERIDVIKGPSSALYGQSIPGGVVMMTSKRPQFTSEGHFRLTAGNNNTQVAAFDYTDAISEHWAFRLTGITRNSDTMYDHQREERYAIAPSLLWQPDENTSLLLRANLQKDPSGGYHSAVPADGSIYGQKLSRGFFDGESNHNVFKRWQQIYSYEFSHKFDDVWSFRQNASYTHSNTQLEQVYQGGWNSDRTLMNRYYSGEDSSLNAFAVDNQLEADLRTAAVKHKVLLGVDFQKFRNNLRSDSAYATPLNPYTGVSGGSTLYSDYLLTTPGINTSYLSRRYEQSGVYLQDEMTLDNWHLNLSGRYDRMKTENINNTANSTDERTDNHASGRASLLYSFDSGISPYVSYSQAITPSLFPDAQQKLLKPMTSEQYEVGIIYQPPGSTSLYSAALYDLTQNDVANRAVPATYYVPAGKVNSQGLELEARSQISDRLSVIAGYTYNRVKFKDAIDGNDGNTPVLAPSNMASLWAQYEAGYGINVGAGIRYIGKQWADDANTLRVPSYTLGDASVRADLGTWAASLKGAFVQLNVNNIADKKYVAACYSTSYCYWGAERSVQATVGYDF.

Residues 1–26 (MFSAFIIKRSAILCSLAMFIPLASIA) form the signal peptide. Residues 28–35 (DTIEVTAK) carry the TonB box motif. 30 beta stranded membrane passes run 29 to 37 (TIEVTAKAG), 65 to 73 (TAQSVSVVT), 91 to 99 (YTPGVFTGF), 106 to 114 (YDTVALRGF), 137 to 145 (NVLQVDPWF), 152 to 160 (IKGPSSALY), 180 to 188 (SEGHFRLTA), 194 to 202 (QVAAFDYTD), 208 to 216 (WAFRLTGIT), 259 to 267 (GGYHSAVPA), 271 to 279 (IYGQKLSRG), 293 to 301 (WQQIYSYEF), 309 to 317 (WSFRQNASY), 353 to 361 (FAVDNQLEA), 370 to 378 (HKVLLGVDF), 427 to 435 (YEQSGVYLQ), 443 to 451 (WHLNLSGRY), 476 to 484 (GRASLLYSF), 491 to 499 (YVSYSQAIT), 517 to 525 (EQYEVGIIY), 531 to 539 (TSLYSAALY), 555 to 563 (YYVPAGKVN), 567 to 575 (LELEARSQI), 579 to 587 (LSVIAGYTY), 610 to 618 (NMASLWAQY), 624 to 632 (INVGAGIRY), 649 to 657 (YTLGDASVR), 671 to 679 (FVQLNVNNI), 684 to 692 (YVAACYSTS), and 702 to 710 (VQATVGYDF). The 114-residue stretch at 61–174 (PLILTAQSVS…PGGVVMMTSK (114 aa)) folds into the TBDR plug domain. The TBDR beta-barrel domain maps to 181–710 (EGHFRLTAGN…SVQATVGYDF (530 aa)). Positions 693–710 (YCYWGAERSVQATVGYDF) match the TonB C-terminal box motif.

This sequence belongs to the TonB-dependent receptor family.

It is found in the cell outer membrane. Ferrioxamine binding and uptake, in association with the TonB protein. The sequence is that of Ferrioxamine receptor (foxA) from Yersinia enterocolitica.